The chain runs to 305 residues: Dihydroorotate dehydrogenase A (fumarate) (305 aa).

Residues Ser21 and 45–46 (KS) each bind FMN. Substrate is bound by residues Lys45, 69–73 (NAIGL), and Asn129. Asn129 is a binding site for FMN. The active-site Nucleophile is the Cys132. FMN is bound by residues Lys167 and Ile193. Position 194-195 (194-195 (NT)) interacts with substrate. Residues Gly219 and 245-246 (GG) contribute to the FMN site.

It belongs to the dihydroorotate dehydrogenase family. Type 1 subfamily. Homodimer. FMN is required as a cofactor.

It is found in the cytoplasm. The catalysed reaction is (S)-dihydroorotate + fumarate = orotate + succinate. It functions in the pathway pyrimidine metabolism; UMP biosynthesis via de novo pathway. In terms of biological role, catalyzes the conversion of dihydroorotate to orotate with fumarate as the electron acceptor. The sequence is that of Dihydroorotate dehydrogenase A (fumarate) (pyrD) from Lactiplantibacillus plantarum (strain ATCC BAA-793 / NCIMB 8826 / WCFS1) (Lactobacillus plantarum).